A 311-amino-acid chain; its full sequence is Prohibitin-2 (311 aa).

The chain crosses the membrane as a helical span at residues glycine 39 to alanine 57. The AIM signature appears at tyrosine 141–leucine 144.

This sequence belongs to the prohibitin family. The mitochondrial prohibitin complex consists of two subunits (PHB1 and PHB2). The subunits assemble into a membrane-associated ring-shaped supercomplex of approximately 1 mDa. Interacts with ATG24/SNX4; the interaction is direct and plays a role in mitophagy.

The protein localises to the mitochondrion inner membrane. Its function is as follows. Prohibitin probably acts as a holdase/unfoldase for the stabilization of newly synthesized mitochondrial proteins. Involved in mitophagy. Required for the switch to necrotrophic growth. The sequence is that of Prohibitin-2 from Colletotrichum higginsianum (strain IMI 349063) (Crucifer anthracnose fungus).